The following is a 112-amino-acid chain: Class I hydrophobin 7 (112 aa).

The signal sequence occupies residues 1-23 (MFARQATSVSAFLVLTLSLFAAA). Disulfide bonds link cysteine 36–cysteine 93, cysteine 43–cysteine 87, cysteine 44–cysteine 74, and cysteine 94–cysteine 107. The N-linked (GlcNAc...) asparagine glycan is linked to asparagine 96.

The protein belongs to the fungal hydrophobin family. In terms of assembly, self-assembles to form functional amyloid fibrils called rodlets. Self-assembly into fibrillar rodlets occurs spontaneously at hydrophobic:hydrophilic interfaces and the rodlets further associate laterally to form amphipathic monolayers.

It is found in the secreted. It localises to the cell wall. Functionally, aerial growth, conidiation, and dispersal of filamentous fungi in the environment rely upon a capability of their secreting small amphipathic proteins called hydrophobins (HPBs) with low sequence identity. Class I can self-assemble into an outermost layer of rodlet bundles on aerial cell surfaces, conferring cellular hydrophobicity that supports fungal growth, development and dispersal; whereas Class II form highly ordered films at water-air interfaces through intermolecular interactions but contribute nothing to the rodlet structure. The protein is Class I hydrophobin 7 of Flammulina velutipes (Agaricus velutipes).